A 473-amino-acid polypeptide reads, in one-letter code: Cysteine--tRNA ligase (473 aa).

Cys-33 provides a ligand contact to Zn(2+). Positions 35-45 (ATVQGQPHIGH) match the 'HIGH' region motif. Residues Cys-211, His-236, and Glu-240 each contribute to the Zn(2+) site. Positions 267–271 (KMSKS) match the 'KMSKS' region motif. Lys-270 lines the ATP pocket.

Belongs to the class-I aminoacyl-tRNA synthetase family. As to quaternary structure, monomer. It depends on Zn(2+) as a cofactor.

Its subcellular location is the cytoplasm. It carries out the reaction tRNA(Cys) + L-cysteine + ATP = L-cysteinyl-tRNA(Cys) + AMP + diphosphate. This is Cysteine--tRNA ligase from Mycobacterium leprae (strain Br4923).